Here is a 505-residue protein sequence, read N- to C-terminus: L-carnitine/gamma-butyrobetaine antiporter (505 aa).

The next 12 membrane-spanning stretches (helical) occupy residues 10–30 (IEPK…WLTV), 51–71 (WGWA…WLVF), 92–112 (IFMM…SIEI), 143–163 (GPLP…FFFV), 195–215 (FYLV…TPLV), 231–251 (LDAI…ACGL), 263–283 (SYLS…SFIM), 316–336 (WTVF…IFLA), 347–367 (LCFG…TVLG), 403–423 (LSTA…VTLI), 446–466 (LLVR…LLAL), and 475–495 (AIIA…LSFI).

The protein belongs to the BCCT transporter (TC 2.A.15) family. CaiT subfamily. Homotrimer.

It localises to the cell inner membrane. The catalysed reaction is 4-(trimethylamino)butanoate(in) + (R)-carnitine(out) = 4-(trimethylamino)butanoate(out) + (R)-carnitine(in). It functions in the pathway amine and polyamine metabolism; carnitine metabolism. Catalyzes the exchange of L-carnitine for gamma-butyrobetaine. In Salmonella gallinarum (strain 287/91 / NCTC 13346), this protein is L-carnitine/gamma-butyrobetaine antiporter.